Consider the following 328-residue polypeptide: Stress response kinase A (328 aa).

Catalysis depends on D201, which acts as the Proton acceptor. 2 residues coordinate Mg(2+): N206 and D217. Residue D217 is part of the active site.

This sequence belongs to the SrkA/RdoA protein kinase family. Monomer. It depends on Mg(2+) as a cofactor.

The protein resides in the cytoplasm. It carries out the reaction L-seryl-[protein] + ATP = O-phospho-L-seryl-[protein] + ADP + H(+). It catalyses the reaction L-threonyl-[protein] + ATP = O-phospho-L-threonyl-[protein] + ADP + H(+). Its function is as follows. A protein kinase that phosphorylates Ser and Thr residues. Probably acts to suppress the effects of stress linked to accumulation of reactive oxygen species. Probably involved in the extracytoplasmic stress response. The protein is Stress response kinase A of Salmonella paratyphi A (strain ATCC 9150 / SARB42).